We begin with the raw amino-acid sequence, 263 residues long: tRNA1(Val) (adenine(37)-N6)-methyltransferase (263 aa).

The protein belongs to the methyltransferase superfamily. tRNA (adenine-N(6)-)-methyltransferase family.

The protein resides in the cytoplasm. The enzyme catalyses adenosine(37) in tRNA1(Val) + S-adenosyl-L-methionine = N(6)-methyladenosine(37) in tRNA1(Val) + S-adenosyl-L-homocysteine + H(+). Functionally, specifically methylates the adenine in position 37 of tRNA(1)(Val) (anticodon cmo5UAC). The protein is tRNA1(Val) (adenine(37)-N6)-methyltransferase of Salmonella choleraesuis (strain SC-B67).